The sequence spans 436 residues: 3-ketoacyl-CoA thiolase (436 aa).

C99 (acyl-thioester intermediate) is an active-site residue. Active-site proton acceptor residues include H392 and C422.

Belongs to the thiolase-like superfamily. Thiolase family. As to quaternary structure, heterotetramer of two alpha chains (FadJ) and two beta chains (FadI).

It is found in the cytoplasm. It carries out the reaction an acyl-CoA + acetyl-CoA = a 3-oxoacyl-CoA + CoA. Its pathway is lipid metabolism; fatty acid beta-oxidation. Functionally, catalyzes the final step of fatty acid oxidation in which acetyl-CoA is released and the CoA ester of a fatty acid two carbons shorter is formed. The protein is 3-ketoacyl-CoA thiolase of Salmonella schwarzengrund (strain CVM19633).